Consider the following 395-residue polypeptide: Chorismate synthase (395 aa).

Residues Arg-40 and Arg-46 each coordinate NADP(+). FMN contacts are provided by residues 137 to 139 (RSS), Gly-308, 323 to 327 (KPLPT), and Arg-349.

The protein belongs to the chorismate synthase family. Homotetramer. FMNH2 is required as a cofactor.

The enzyme catalyses 5-O-(1-carboxyvinyl)-3-phosphoshikimate = chorismate + phosphate. It functions in the pathway metabolic intermediate biosynthesis; chorismate biosynthesis; chorismate from D-erythrose 4-phosphate and phosphoenolpyruvate: step 7/7. Its function is as follows. Catalyzes the anti-1,4-elimination of the C-3 phosphate and the C-6 proR hydrogen from 5-enolpyruvylshikimate-3-phosphate (EPSP) to yield chorismate, which is the branch point compound that serves as the starting substrate for the three terminal pathways of aromatic amino acid biosynthesis. This reaction introduces a second double bond into the aromatic ring system. In Gloeobacter violaceus (strain ATCC 29082 / PCC 7421), this protein is Chorismate synthase.